A 121-amino-acid chain; its full sequence is Phosphoribosyl-ATP pyrophosphatase (121 aa).

Belongs to the PRA-PH family.

The protein localises to the cytoplasm. The catalysed reaction is 1-(5-phospho-beta-D-ribosyl)-ATP + H2O = 1-(5-phospho-beta-D-ribosyl)-5'-AMP + diphosphate + H(+). It participates in amino-acid biosynthesis; L-histidine biosynthesis; L-histidine from 5-phospho-alpha-D-ribose 1-diphosphate: step 2/9. In Burkholderia multivorans (strain ATCC 17616 / 249), this protein is Phosphoribosyl-ATP pyrophosphatase.